The sequence spans 1175 residues: DNA-directed RNA polymerase subunit beta (1175 aa).

Positions 1-24 (MEGSLLVASSASNNETANNVESTD) are disordered. Low complexity predominate over residues 7-23 (VASSASNNETANNVEST).

The protein belongs to the RNA polymerase beta chain family. The RNAP catalytic core consists of 2 alpha, 1 beta, 1 beta' and 1 omega subunit. When a sigma factor is associated with the core the holoenzyme is formed, which can initiate transcription.

The enzyme catalyses RNA(n) + a ribonucleoside 5'-triphosphate = RNA(n+1) + diphosphate. In terms of biological role, DNA-dependent RNA polymerase catalyzes the transcription of DNA into RNA using the four ribonucleoside triphosphates as substrates. The polypeptide is DNA-directed RNA polymerase subunit beta (Renibacterium salmoninarum (strain ATCC 33209 / DSM 20767 / JCM 11484 / NBRC 15589 / NCIMB 2235)).